The chain runs to 341 residues: Radial spoke head 14 homolog (341 aa).

ARM repeat units lie at residues Pro-16–His-55, Pro-57–Thr-96, Val-99–Leu-138, Pro-139–Gln-178, Asp-180–Ile-217, Leu-219–Val-258, Thr-260–Glu-300, and Pro-302–Trp-339.

It belongs to the flagellar radial spoke RSP14 family. In terms of assembly, component of the axonemal radial spoke complex 1 (RS1), at least composed of spoke head proteins RSPH1, RSPH3, RSPH9 and the cilia-specific component RSPH4A or sperm-specific component RSPH6A, spoke stalk proteins RSPH14, DNAJB13, DYDC1, ROPN1L and NME5, and the anchor protein IQUB.

It is found in the cytoplasm. The protein localises to the cytoskeleton. The protein resides in the flagellum axoneme. In terms of biological role, functions as part of axonemal radial spoke complexes that play an important part in the motility of sperm and cilia. The protein is Radial spoke head 14 homolog of Mus musculus (Mouse).